The following is a 96-amino-acid chain: Small ribosomal subunit protein bS6 (96 aa).

Belongs to the bacterial ribosomal protein bS6 family.

Functionally, binds together with bS18 to 16S ribosomal RNA. The protein is Small ribosomal subunit protein bS6 of Bacillus mycoides (strain KBAB4) (Bacillus weihenstephanensis).